Consider the following 500-residue polypeptide: Cytochrome P450 2D4 (500 aa).

Residue cysteine 446 coordinates heme.

It belongs to the cytochrome P450 family. Heme is required as a cofactor. As to expression, brain.

The protein localises to the endoplasmic reticulum membrane. The protein resides in the microsome membrane. The enzyme catalyses an organic molecule + reduced [NADPH--hemoprotein reductase] + O2 = an alcohol + oxidized [NADPH--hemoprotein reductase] + H2O + H(+). In terms of biological role, cytochromes P450 are a group of heme-thiolate monooxygenases. In liver microsomes, this enzyme is involved in an NADPH-dependent electron transport pathway. It oxidizes a variety of structurally unrelated compounds, including steroids, fatty acids, and xenobiotics. The sequence is that of Cytochrome P450 2D4 (Cyp2d4) from Rattus norvegicus (Rat).